Consider the following 590-residue polypeptide: Acetolactate synthase large subunit (590 aa).

A thiamine diphosphate-binding site is contributed by Glu-61. Residues Arg-163, 271-292 (HGTAYANFAVSECDLLIALGAR), and 314-333 (DIDPAEVGKNRIPQVAIVGD) contribute to the FAD site. A thiamine pyrophosphate binding region spans residues 405–484 (QHQMWSAQFL…IKIVIINNRW (80 aa)). Mg(2+) is bound by residues Asp-455 and Asn-482.

This sequence belongs to the TPP enzyme family. Dimer of large and small chains. Mg(2+) serves as cofactor. Requires thiamine diphosphate as cofactor.

It localises to the plastid. Its subcellular location is the chloroplast. The catalysed reaction is 2 pyruvate + H(+) = (2S)-2-acetolactate + CO2. It participates in amino-acid biosynthesis; L-isoleucine biosynthesis; L-isoleucine from 2-oxobutanoate: step 1/4. Its pathway is amino-acid biosynthesis; L-valine biosynthesis; L-valine from pyruvate: step 1/4. The sequence is that of Acetolactate synthase large subunit (ilvB) from Porphyra purpurea (Red seaweed).